A 376-amino-acid chain; its full sequence is ATP phosphoribosyltransferase regulatory subunit (376 aa).

This sequence belongs to the class-II aminoacyl-tRNA synthetase family. HisZ subfamily. As to quaternary structure, heteromultimer composed of HisG and HisZ subunits.

Its subcellular location is the cytoplasm. Its pathway is amino-acid biosynthesis; L-histidine biosynthesis; L-histidine from 5-phospho-alpha-D-ribose 1-diphosphate: step 1/9. Its function is as follows. Required for the first step of histidine biosynthesis. May allow the feedback regulation of ATP phosphoribosyltransferase activity by histidine. This is ATP phosphoribosyltransferase regulatory subunit from Brucella anthropi (strain ATCC 49188 / DSM 6882 / CCUG 24695 / JCM 21032 / LMG 3331 / NBRC 15819 / NCTC 12168 / Alc 37) (Ochrobactrum anthropi).